Here is a 72-residue protein sequence, read N- to C-terminus: Hypotensin-1 (72 aa).

The first 24 residues, 1–24 (MKMMIPVIFSILLLIFSLSSTAMS), serve as a signal peptide directing secretion. A propeptide spanning residues 25-35 (LEDEQENMEER) is cleaved from the precursor. Ser41 is modified (phosphoserine). Residues 53–72 (ETNAKPPARFDPAAFEKSDD) form a disordered region. Positions 61–72 (RFDPAAFEKSDD) are excised as a propeptide.

This sequence belongs to the non-disulfide-bridged peptide (NDBP) superfamily. In terms of processing, undergoes enzymatic cleavages by carboxypeptidases, endopeptidases, and aminopeptidases resulting in at least 46 fragments of this protein. Expressed by the venom gland.

Its subcellular location is the secreted. In terms of biological role, agonist of the B2 bradykinin receptor (BDKRB2). Potentiates the hypotensive effect of bradykinin (BK) and induces a direct vasorelaxing effect independent of BK, by endothelium- and nitric oxide (NO)-dependent mechanisms in rat aortic ring preparations. Also exerts proangiogenic, antiinflammatory, and antifibrogenic activities. Does not inhibit the angiotensin-converting enzyme (ACE) but increases its activity, and inhibits neprilysin (NEP) in a non-competitive manner. Exerts intermediate cytotoxicity and pro-inflammatory effects on mouse macrophages, and increases the phagocytic activity of these murine cells. Functionally, presents moderate hemolytic activity at physiological concentrations (micromolar range). Does not induce mast cell degranulation, lactate dehydrogenase (LDH) release from mast cells and antimicrobial effects. In vivo, causes intense pain (but no edema formation), when injected in mice hind paws. Also induces discomfort and anxiety in mice, as it moderately diminishes locomotion and moderately increases rearing behavior. The sequence is that of Hypotensin-1 from Tityus serrulatus (Brazilian scorpion).